The following is a 221-amino-acid chain: 2,3-bisphosphoglycerate-dependent phosphoglycerate mutase (221 aa).

Substrate is bound by residues 8–15 (RHGNSLWN), 21–22 (TG), R60, 87–90 (ERHY), K98, 114–115 (RR), and 174–175 (GN). The active-site Tele-phosphohistidine intermediate is the H9. E87 functions as the Proton donor/acceptor in the catalytic mechanism. The interval 114–140 (RRGYDTPPPPLHSQADDPRYEEPPPLS) is disordered.

This sequence belongs to the phosphoglycerate mutase family. BPG-dependent PGAM subfamily.

It catalyses the reaction (2R)-2-phosphoglycerate = (2R)-3-phosphoglycerate. It functions in the pathway carbohydrate degradation; glycolysis; pyruvate from D-glyceraldehyde 3-phosphate: step 3/5. Its function is as follows. Catalyzes the interconversion of 2-phosphoglycerate and 3-phosphoglycerate. The chain is 2,3-bisphosphoglycerate-dependent phosphoglycerate mutase from Tropheryma whipplei (strain TW08/27) (Whipple's bacillus).